A 179-amino-acid polypeptide reads, in one-letter code: Guanosine-3',5'-bis(diphosphate) 3'-pyrophosphohydrolase MESH1 (179 aa).

G2 is modified (N-acetylglycine). K25 is subject to N6-acetyllysine. The HD domain occupies 32 to 127; it reads YINHPIGVAR…VKLADKLYNL (96 aa). Mn(2+)-binding residues include H35, H61, and D62. Active-site nucleophile residues include E65 and D66. K97 bears the N6-acetyllysine mark. Residue D122 coordinates Mn(2+). N6-acetyllysine is present on K123.

It belongs to the MESH1 family. Requires Mn(2+) as cofactor.

The catalysed reaction is guanosine 3',5'-bis(diphosphate) + H2O = GDP + diphosphate + H(+). PpGpp hydrolyzing enzyme involved in starvation response. The sequence is that of Guanosine-3',5'-bis(diphosphate) 3'-pyrophosphohydrolase MESH1 (HDDC3) from Homo sapiens (Human).